The chain runs to 147 residues: Transthyretin (147 aa).

Positions M1 to A20 are cleaved as a signal peptide. Sulfocysteine is present on C30. L-thyroxine is bound at residue K35. E62 is modified (4-carboxyglutamate). S72 carries the phosphoserine modification. L-thyroxine is bound at residue E74. An N-linked (GlcNAc...) asparagine glycan is attached at N118. S137 contributes to the L-thyroxine binding site.

The protein belongs to the transthyretin family. In terms of assembly, homotetramer. Dimer of dimers. In the homotetramer, subunits assemble around a central channel that can accommodate two ligand molecules. Interacts with RBP4. Sulfonation of the reactive cysteine Cys-30 enhances the stability of the native conformation of TTR, avoiding misassembly of the protein leading to amyloid formation. Highly expressed in the choroid plexus.

Its subcellular location is the secreted. Functionally, thyroid hormone-binding protein. Probably transports thyroxine from the bloodstream to the brain. The chain is Transthyretin (TTR) from Ovis aries (Sheep).